The following is a 446-amino-acid chain: Rhoptry surface protein CERLI1 (446 aa).

The C2 domain occupies 39–208 (KPIGQLYRLM…NQTKNNEKIE (170 aa)). One can recognise a PH domain in the interval 252 to 363 (GYLLHSNFYI…ILVSNYKRER (112 aa)).

Its subcellular location is the cytoplasmic vesicle. The protein resides in the secretory vesicle. The protein localises to the rhoptry membrane. In terms of biological role, essential for merozoite invasion of host cells by controlling rhoptry secretion. Binds to phosphatidic acid (PA) and phosphatidylinositol 4,5-bisphosphate (PIP2) lipids and thus, likely contributes to the assembly of the machinery that docks or primes the rhoptry to the parasite cell membrane prior to the fusion with the host cell membrane. The sequence is that of Rhoptry surface protein CERLI1 from Plasmodium falciparum (isolate 3D7).